We begin with the raw amino-acid sequence, 349 residues long: Ferredoxin--NADP reductase 1 (349 aa).

FAD contacts are provided by E36, K44, Y48, V88, L123, D290, and S331.

This sequence belongs to the ferredoxin--NADP reductase type 2 family. As to quaternary structure, homodimer. The cofactor is FAD.

It catalyses the reaction 2 reduced [2Fe-2S]-[ferredoxin] + NADP(+) + H(+) = 2 oxidized [2Fe-2S]-[ferredoxin] + NADPH. This chain is Ferredoxin--NADP reductase 1, found in Bacillus cereus (strain ATCC 10987 / NRS 248).